The chain runs to 321 residues: Electron transfer flavoprotein subunit alpha (321 aa).

R211, S236, R237, Q250, V251, S254, G255, S270, S272, Q274, H275, N289, D307, and I308 together coordinate FAD.

As to quaternary structure, heterodimer of an alpha and a beta subunit. Forms a ternary complex with trimethylamine dehydrogenase. Requires FAD as cofactor.

Its function is as follows. Heterodimeric electron transfer flavoprotein that accepts electrons from trimethylamine dehydrogenase. It transfers the electrons to the main respiratory chain via ETF-ubiquinone oxidoreductase (ETF dehydrogenase). This Methylophilus methylotrophus (Bacterium W3A1) protein is Electron transfer flavoprotein subunit alpha (etfA).